We begin with the raw amino-acid sequence, 834 residues long: ATP-dependent RNA helicase ddx23 (834 aa).

Disordered regions lie at residues 1–245 (MDPP…TQFS) and 322–371 (FGGY…GKQI). Positions 10-25 (SKRDTKKKDEVNKEQP) are enriched in basic and acidic residues. The span at 42-54 (SNPTQEEPTNTLQ) shows a compositional bias: polar residues. 4 stretches are compositionally biased toward basic and acidic residues: residues 70–110 (GLKE…DYRD), 117–164 (GRDR…RRDG), 171–205 (RRRDERRENSGRRDYRDNDRRDDRRDNGRYGRDND), and 231–245 (DIHKDRIKRDTTQFS). A compositionally biased stretch (low complexity) spans 328-362 (NNNNNGNHYNGNIYNNNNNNNNNNNNNNNINNNNN). The Q motif signature appears at 413–441 (RTWQESNLPREILEAIRQLGYEKPSPIQM). Residues 444–643 (IPISLTGRDI…KKYLRRPCTI (200 aa)) form the Helicase ATP-binding domain. Position 457–464 (457–464 (AETGSGKT)) interacts with ATP. A DEAD box motif is present at residues 570-573 (DEAD). In terms of domain architecture, Helicase C-terminal spans 654-815 (RIRQTVIFVK…IVPIELLKHP (162 aa)). The tract at residues 813 to 834 (KHPSSQQKHGSSKDHNKSVIFK) is disordered. A compositionally biased stretch (basic and acidic residues) spans 823-834 (SSKDHNKSVIFK).

Belongs to the DEAD box helicase family. DDX23/PRP28 subfamily.

The protein resides in the cytoplasm. It is found in the nucleus. The catalysed reaction is ATP + H2O = ADP + phosphate + H(+). Functionally, probable ATP-dependent RNA helicase which may be involved in mRNA splicing. In Dictyostelium discoideum (Social amoeba), this protein is ATP-dependent RNA helicase ddx23 (helB2).